The following is a 419-amino-acid chain: Acetyl transferase GW6a (419 aa).

Residues 12–210 (VRVREFDVEK…GHPVHAHRLP (199 aa)) enclose the N-acetyltransferase domain. The disordered stretch occupies residues 44-68 (VHDHADDGDGAAAKEKKKTKTKTKK). Basic residues predominate over residues 58–68 (EKKKTKTKTKK).

Belongs to the acetyltransferase family. Interacts (via C-terminus) with HDR3 (via N-terminus). In terms of processing, ubiquitinated at Lys-63 by HDR3. Polyubiquitination of GW6A delays its degradation by the 26S proteasome and enhances GW6A histone acetyltransferase activity. As to expression, expressed in roots, leaf blades, leaf sheaths, shoot apical meristem and young panicles.

It localises to the nucleus. Functionally, possesses intrinsic histone acetyltransferase activity and acts as a positive regulator of grain weight, hull size, yield, and plant biomass. Regulates postitively grain weight and yield by enlarging spikelet hulls via increasing cell number and accelerating grain filling. In vitro, catalyzes the acetylation of histone H4 at Lys-6 (H4K5ac), Lys-13 (H4K12ac) and Lys-17 (H4K16ac). Involved in the regulation of plastochron (the time interval between leaf initiation event). This is Acetyl transferase GW6a from Oryza sativa subsp. japonica (Rice).